The sequence spans 356 residues: Transcription factor MafB (356 aa).

Disordered stretches follow at residues 49 to 79 and 140 to 240; these read RLQP…PTEQ and YRGA…LNVE. Residues 55–77 are compositionally biased toward low complexity; that stretch reads SVSSTPISTPCSSVPSSPSFSPT. Composition is skewed to basic residues over residues 183 to 196 and 212 to 223; these read AHGH…HHHH and HHRHHHHHHPHG. A basic motif region spans residues 270–295; sequence RLKQKRRTLKNRGYAQSCRFKRVQQK. In terms of domain architecture, bZIP spans 270–333; sequence RLKQKRRTLK…DAYKLKCEKL (64 aa). Positions 298 to 319 are leucine-zipper; that stretch reads LENEKTQLINQVEQLKQEINRL.

The protein belongs to the bZIP family. Maf subfamily. As to quaternary structure, homodimer or heterodimer with other bHLH-Zip transcription factors. Binds DNA as a homodimer or a heterodimer.

The protein resides in the nucleus. May act as a transcriptional activator or repressor. Involved in neurogenesis. Involved in the development of rhombomeres (r) 5 and 6 segments from their common precursor 'proto-segment' in the hindbrain. This Danio rerio (Zebrafish) protein is Transcription factor MafB (mafb).